Consider the following 571-residue polypeptide: uncharacterized protein (571 aa).

The next 5 membrane-spanning stretches (helical) occupy residues 10–29, 36–55, 65–87, 96–118, and 166–188; these read VRLH…HFIG, VSLG…GLLF, WAFF…FASL, ALAV…LFRF, and ATTY…PRLL. In terms of domain architecture, RCK C-terminal spans 294 to 378; sequence TEVDDQELLS…IATAARNLGF (85 aa). 6 consecutive transmembrane segments (helical) span residues 388–406, 411–433, 446–465, 480–502, 509–531, and 546–568; these read LVYL…LLQV, VPLG…WLYS, LRLL…GLAA, LFAK…GLLL, LPPI…LNAL, and VPFA…CAVA.

It belongs to the AAE transporter (TC 2.A.81) family.

The protein localises to the cell membrane. This is an uncharacterized protein from Bordetella bronchiseptica (strain ATCC BAA-588 / NCTC 13252 / RB50) (Alcaligenes bronchisepticus).